We begin with the raw amino-acid sequence, 76 residues long: Beta-defensin 121 (76 aa).

Residues 1–15 (MKLLLLLLTVTLLLA) form the signal peptide. Cystine bridges form between cysteine 23/cysteine 50, cysteine 30/cysteine 44, and cysteine 34/cysteine 51.

Belongs to the beta-defensin family.

It localises to the secreted. In terms of biological role, has antibacterial activity. The sequence is that of Beta-defensin 121 (DEFB121) from Pan troglodytes (Chimpanzee).